A 221-amino-acid polypeptide reads, in one-letter code: Adenylate kinase (221 aa).

10 to 15 is a binding site for ATP; that stretch reads GAGKGT. The segment at 30–59 is NMP; that stretch reads STGDMLRAAVKAGTPLGVEAKKVMDAGGLV. AMP contacts are provided by residues Thr-31, Arg-36, 57 to 59, 85 to 88, and Gln-92; these read GLV and GFPR. Residues 122 to 159 form an LID region; it reads GRRVHVASGRTYHLKYNPPKTEGVDDETGEPLIQRDDD. ATP contacts are provided by residues Arg-123 and 132 to 133; that span reads TY. The segment at 138–159 is disordered; sequence NPPKTEGVDDETGEPLIQRDDD. AMP contacts are provided by Arg-156 and Arg-167. Gly-207 is a binding site for ATP.

The protein belongs to the adenylate kinase family. Monomer.

It is found in the cytoplasm. It carries out the reaction AMP + ATP = 2 ADP. It participates in purine metabolism; AMP biosynthesis via salvage pathway; AMP from ADP: step 1/1. Its function is as follows. Catalyzes the reversible transfer of the terminal phosphate group between ATP and AMP. Plays an important role in cellular energy homeostasis and in adenine nucleotide metabolism. This chain is Adenylate kinase, found in Cupriavidus taiwanensis (strain DSM 17343 / BCRC 17206 / CCUG 44338 / CIP 107171 / LMG 19424 / R1) (Ralstonia taiwanensis (strain LMG 19424)).